We begin with the raw amino-acid sequence, 446 residues long: Adenylosuccinate synthetase 1 (446 aa).

GTP is bound by residues Gly-20–Lys-26 and Gly-48–Thr-50. Asp-21 functions as the Proton acceptor in the catalytic mechanism. Positions 21 and 48 each coordinate Mg(2+). IMP-binding positions include Asp-21–Lys-24, Asn-46–His-49, Thr-137, Arg-151, Gln-232, Thr-247, and Arg-319. Residue His-49 is the Proton donor of the active site. Ser-315–Arg-321 contributes to the substrate binding site. GTP-binding positions include Arg-321, Lys-347 to Asp-349, and Ser-429 to Gly-431.

This sequence belongs to the adenylosuccinate synthetase family. As to quaternary structure, homodimer. Requires Mg(2+) as cofactor.

The protein resides in the cytoplasm. It carries out the reaction IMP + L-aspartate + GTP = N(6)-(1,2-dicarboxyethyl)-AMP + GDP + phosphate + 2 H(+). Its pathway is purine metabolism; AMP biosynthesis via de novo pathway; AMP from IMP: step 1/2. In terms of biological role, plays an important role in the de novo pathway of purine nucleotide biosynthesis. Catalyzes the first committed step in the biosynthesis of AMP from IMP. The sequence is that of Adenylosuccinate synthetase 1 from Cupriavidus pinatubonensis (strain JMP 134 / LMG 1197) (Cupriavidus necator (strain JMP 134)).